A 233-amino-acid chain; its full sequence is Octanoyltransferase (233 aa).

Residues 38–218 (AGGPDTLLLL…LVCDALDGVL (181 aa)) form the BPL/LPL catalytic domain. Residues 57–66 (RRTEPHERPL) are compositionally biased toward basic and acidic residues. Positions 57 to 77 (RRTEPHERPLDGTPVVDTDRG) are disordered. Residues 76 to 83 (RGGKITWH), 148 to 150 (AIG), and 161 to 163 (GFA) contribute to the substrate site. The Acyl-thioester intermediate role is filled by Cys-179.

It belongs to the LipB family.

It is found in the cytoplasm. It catalyses the reaction octanoyl-[ACP] + L-lysyl-[protein] = N(6)-octanoyl-L-lysyl-[protein] + holo-[ACP] + H(+). Its pathway is protein modification; protein lipoylation via endogenous pathway; protein N(6)-(lipoyl)lysine from octanoyl-[acyl-carrier-protein]: step 1/2. In terms of biological role, catalyzes the transfer of endogenously produced octanoic acid from octanoyl-acyl-carrier-protein onto the lipoyl domains of lipoate-dependent enzymes. Lipoyl-ACP can also act as a substrate although octanoyl-ACP is likely to be the physiological substrate. This Mycobacterium avium (strain 104) protein is Octanoyltransferase.